We begin with the raw amino-acid sequence, 215 residues long: Cytochrome b6 (215 aa).

A helical transmembrane segment spans residues 32 to 52 (IFYCLGGITLTCFLVQVATGF). Cys-35 serves as a coordination point for heme c. Heme b contacts are provided by His-86 and His-100. 3 helical membrane passes run 90–110 (ASMM…TGGF), 116–136 (LTWV…VTGY), and 186–206 (LHTF…FPMI). Positions 187 and 202 each coordinate heme b.

The protein belongs to the cytochrome b family. PetB subfamily. In terms of assembly, the 4 large subunits of the cytochrome b6-f complex are cytochrome b6, subunit IV (17 kDa polypeptide, PetD), cytochrome f and the Rieske protein, while the 4 small subunits are PetG, PetL, PetM and PetN. The complex functions as a dimer. Heme b is required as a cofactor. It depends on heme c as a cofactor.

Its subcellular location is the plastid. It is found in the chloroplast thylakoid membrane. Functionally, component of the cytochrome b6-f complex, which mediates electron transfer between photosystem II (PSII) and photosystem I (PSI), cyclic electron flow around PSI, and state transitions. The protein is Cytochrome b6 of Agrostis stolonifera (Creeping bentgrass).